We begin with the raw amino-acid sequence, 285 residues long: GPN-loop GTPase 3 (285 aa).

13 to 18 (GSGKST) lines the GTP pocket. The Gly-Pro-Asn (GPN)-loop; involved in dimer interface signature appears at 70–72 (GPN). GTP is bound at residue 172-175 (TKID). The disordered stretch occupies residues 253–276 (GEDLEPKEPPLENDDDDDDDEGDE). Residues 263–275 (LENDDDDDDDEGD) show a composition bias toward acidic residues.

It belongs to the GPN-loop GTPase family. Heterodimer with gpn1. Binds to RNA polymerase II (RNAPII).

Its function is as follows. Small GTPase required for proper localization of RNA polymerase II (RNAPII). May act at an RNAP assembly step prior to nuclear import. The protein is GPN-loop GTPase 3 (gpn3) of Dictyostelium discoideum (Social amoeba).